Reading from the N-terminus, the 291-residue chain is Kidney mitochondrial carrier protein 1 (291 aa).

Solcar repeat units follow at residues 7–96 (KPFI…LKRL), 104–189 (ETLV…TKKH), and 198–289 (DTVY…LKKL). 6 consecutive transmembrane segments (helical) span residues 9 to 26 (FIYG…TFPI), 71 to 89 (GIAP…KIGT), 106 to 124 (LVLN…SCIA), 164 to 183 (GVSL…LPVY), 204 to 224 (FLSS…VDVV), and 264 to 283 (GFWP…FITY).

This sequence belongs to the mitochondrial carrier (TC 2.A.29) family.

The protein resides in the mitochondrion inner membrane. The enzyme catalyses sulfite(in) + sulfate(out) = sulfite(out) + sulfate(in). It catalyses the reaction thiosulfate(in) + sulfate(out) = thiosulfate(out) + sulfate(in). The catalysed reaction is sulfate(out) + phosphate(in) = sulfate(in) + phosphate(out). It carries out the reaction oxalate(in) + sulfate(out) = oxalate(out) + sulfate(in). The enzyme catalyses malonate(in) + sulfate(out) = malonate(out) + sulfate(in). It catalyses the reaction maleate(in) + sulfate(out) = maleate(out) + sulfate(in). The catalysed reaction is (S)-malate(in) + sulfate(out) = (S)-malate(out) + sulfate(in). It carries out the reaction (3S)-citramalate(in) + sulfate(out) = (3S)-citramalate(out) + sulfate(in). The enzyme catalyses (3R)-citramalate(in) + sulfate(out) = (3R)-citramalate(out) + sulfate(in). It catalyses the reaction sulfate(out) + succinate(in) = sulfate(in) + succinate(out). The catalysed reaction is (S,S)-tartrate(in) + sulfate(out) = (S,S)-tartrate(out) + sulfate(in). It carries out the reaction (2R,3R)-tartrate(in) + sulfate(out) = (2R,3R)-tartrate(out) + sulfate(in). The enzyme catalyses D-aspartate(in) + sulfate(out) = D-aspartate(out) + sulfate(in). It catalyses the reaction L-aspartate(in) + sulfate(out) = L-aspartate(out) + sulfate(in). The catalysed reaction is sulfate(in) = sulfate(out). It carries out the reaction phosphate(in) = phosphate(out). The enzyme catalyses (S)-malate(out) = (S)-malate(in). Functionally, probable transporter. In terms of biological role, antiporter that transports inorganic anions (sulfate, sulfite, thiosulfate and phosphate) and, to a lesser extent, a variety of dicarboxylates (e.g. malonate, malate and citramalate) and, even more so, aspartate. The sulfate/sulfate exchange is much higher than the phosphate/phosphate and malate/malate exchanges. The transport affinities is higher for sulfate and thiosulfate than for any other substrate. May catalyze the export of sulfite and thiosulfate (the hydrogen sulfide degradation products) from the mitochondria, thereby modulating the level of the hydrogen sulfide. Also may mediate a very low unidirectional transport of sulfate, phosphate and (S)-malate. The sequence is that of Kidney mitochondrial carrier protein 1 from Xenopus laevis (African clawed frog).